Consider the following 362-residue polypeptide: Flotillin-like protein FloA 2 (362 aa).

A helical transmembrane segment spans residues 24-44; that stretch reads TALLIGALVIFAGIVVVLFIF.

Belongs to the flotillin-like FloA family. In terms of assembly, homooligomerizes.

It localises to the cell membrane. The protein localises to the membrane raft. Functionally, found in functional membrane microdomains (FMM) that may be equivalent to eukaryotic membrane rafts. FMMs are highly dynamic and increase in number as cells age. Flotillins are thought to be important factors in membrane fluidity. The sequence is that of Flotillin-like protein FloA 2 from Rhodopirellula baltica (strain DSM 10527 / NCIMB 13988 / SH1).